The primary structure comprises 145 residues: 3-hydroxyacyl-[acyl-carrier-protein] dehydratase FabZ (145 aa).

Residue His-51 is part of the active site.

This sequence belongs to the thioester dehydratase family. FabZ subfamily.

Its subcellular location is the cytoplasm. The enzyme catalyses a (3R)-hydroxyacyl-[ACP] = a (2E)-enoyl-[ACP] + H2O. In terms of biological role, involved in unsaturated fatty acids biosynthesis. Catalyzes the dehydration of short chain beta-hydroxyacyl-ACPs and long chain saturated and unsaturated beta-hydroxyacyl-ACPs. The protein is 3-hydroxyacyl-[acyl-carrier-protein] dehydratase FabZ of Staphylococcus epidermidis (strain ATCC 35984 / DSM 28319 / BCRC 17069 / CCUG 31568 / BM 3577 / RP62A).